The following is a 290-amino-acid chain: Ribosomal large subunit pseudouridine synthase B (290 aa).

One can recognise an S4 RNA-binding domain in the interval 3–75; that stretch reads EKLQKVLARA…ICRVLAYYKP (73 aa). D110 (nucleophile) is an active-site residue. Residues 251–290 form a disordered region; the sequence is SSKVAVEKDRRRMKANQIRRAVKRHSQVSGSRRSGGRNNG.

This sequence belongs to the pseudouridine synthase RsuA family.

The enzyme catalyses uridine(2605) in 23S rRNA = pseudouridine(2605) in 23S rRNA. Its function is as follows. Responsible for synthesis of pseudouridine from uracil-2605 in 23S ribosomal RNA. The sequence is that of Ribosomal large subunit pseudouridine synthase B (rluB) from Shigella flexneri.